The following is a 184-amino-acid chain: MIEHNPTTIYGTTIVTVRKDGKVVIAGDGQVSLGNTVMKGNARKVRRIGKGNVIAGFAGATADAFTLLERLEAKLEQYPDQLMRASVELAKDWRTDRYLRKLEAMMLVADSKATLALTGTGDVLEPEQGVMAIGSGGNYALAAARALIETDKSAEEIARKAMNIAADICIYTNHNIIVESLDAQ.

Residue Thr-12 is part of the active site. Na(+)-binding residues include Ala-166, Cys-169, and Thr-172.

It belongs to the peptidase T1B family. HslV subfamily. As to quaternary structure, a double ring-shaped homohexamer of HslV is capped on each side by a ring-shaped HslU homohexamer. The assembly of the HslU/HslV complex is dependent on binding of ATP.

The protein resides in the cytoplasm. The catalysed reaction is ATP-dependent cleavage of peptide bonds with broad specificity.. Allosterically activated by HslU binding. Protease subunit of a proteasome-like degradation complex believed to be a general protein degrading machinery. The sequence is that of ATP-dependent protease subunit HslV from Brucella ovis (strain ATCC 25840 / 63/290 / NCTC 10512).